The following is a 2353-amino-acid chain: Otogelin-like protein (2353 aa).

An N-terminal signal peptide occupies residues 1-31 (MNIVRKLNLMIPWSIFLLHVLLFSLQEYICA). The VWFD 1 domain occupies 121–297 (GICKTWGQYH…VQTPDDTKCV (177 aa)). Intrachain disulfides connect Cys123-Cys257 and Cys145-Cys296. Asn144 carries N-linked (GlcNAc...) asparagine glycosylation. The 54-residue stretch at 390-443 (CDDSFVHRDCISCCPPTCTFEKQCLGSNLHCLDGCYCPDGLVMDNGTCISLENC) folds into the TIL 1 domain. 2 N-linked (GlcNAc...) asparagine glycosylation sites follow: Asn434 and Asn473. The 174-residue stretch at 481-654 (VQCSVVGDSH…NAWRVSSTCF (174 aa)) folds into the VWFD 2 domain. 3 disulfides stabilise this stretch: Cys483/Cys618, Cys505/Cys653, and Cys527/Cys535. One can recognise a TIL 2 domain in the interval 745 to 800 (CQKGMLYHHCSSFCLHSCISLSSPEQCSDDCAEGCNCPEGKFYEDTLNFCVPIFHC). N-linked (GlcNAc...) asparagine glycans are attached at residues Asn826 and Asn876. In terms of domain architecture, VWFD 3 spans 946-1115 (AVCTIYGDRH…SWALGQCESP (170 aa)). 2 cysteine pairs are disulfide-bonded: Cys948-Cys1078 and Cys992-Cys999. Asn1289, Asn1604, and Asn2198 each carry an N-linked (GlcNAc...) asparagine glycan. In terms of domain architecture, VWFD 4 spans 1534–1723 (CRCSMLSELS…SWEIEKSFEV (190 aa)). Cysteines 1536 and 1683 form a disulfide. 4 disulfide bridges follow: Cys2261–Cys2317, Cys2282–Cys2331, Cys2293–Cys2348, and Cys2297–Cys2350. A CTCK domain is found at 2261–2353 (CKREERICQK…EPIDCTCQWN (93 aa)).

It belongs to the otogelin family. Expressed at high levels in fetal inner ear and heart. Low levels in fetal skeletal muscle, kidney, spleen and colon. Not detected in fetal liver, lung, brain, nor in fetal stomach. In adult tissues, highest levels in brain, kidney, heart and retina. Relatively low levels in lung, spleen and duodenum. Not detected in adult skeletal muscle, liver, nor testis.

It localises to the secreted. This chain is Otogelin-like protein (OTOGL), found in Homo sapiens (Human).